We begin with the raw amino-acid sequence, 53 residues long: Rubredoxin (53 aa).

Residues 1–53 (MQKYVCDICGYVYDPAVGDPDNGVAPGTAFADLPEDWVCPECGVSKDEFSPEA) enclose the Rubredoxin-like domain. Fe cation contacts are provided by C6, C9, C39, and C42.

It belongs to the rubredoxin family. The cofactor is Fe(3+).

In terms of biological role, rubredoxin is a small nonheme, iron protein lacking acid-labile sulfide. Its single Fe, chelated to 4 Cys, functions as an electron acceptor and may also stabilize the conformation of the molecule. The chain is Rubredoxin from Butyribacterium methylotrophicum.